The primary structure comprises 193 residues: 7-methyl-GTP pyrophosphatase (193 aa).

The Proton acceptor role is filled by Asp-70.

The protein belongs to the Maf family. YceF subfamily. A divalent metal cation is required as a cofactor.

The protein localises to the cytoplasm. It catalyses the reaction N(7)-methyl-GTP + H2O = N(7)-methyl-GMP + diphosphate + H(+). Its function is as follows. Nucleoside triphosphate pyrophosphatase that hydrolyzes 7-methyl-GTP (m(7)GTP). May have a dual role in cell division arrest and in preventing the incorporation of modified nucleotides into cellular nucleic acids. This is 7-methyl-GTP pyrophosphatase from Vibrio parahaemolyticus serotype O3:K6 (strain RIMD 2210633).